A 382-amino-acid polypeptide reads, in one-letter code: uncharacterized protein (382 aa).

A PE domain is found at 1–92; that stretch reads MQFLSVIPEQ…GATAYRNTEF (92 aa). 8 helical membrane-spanning segments follow: residues 23–43, 155–175, 203–223, 230–250, 261–281, 284–304, 315–335, and 347–367; these read SALS…VSAA, AAVA…NGVV, FIVA…AVVG, TFLT…LAGV, LASG…VQLF, AFLL…IAVV, LVVP…AQFA, and LGAP…QGIG.

This sequence belongs to the mycobacterial PE family.

It localises to the cell membrane. This is an uncharacterized protein from Mycobacterium bovis (strain ATCC BAA-935 / AF2122/97).